We begin with the raw amino-acid sequence, 393 residues long: Inulin fructotransferase [DFA-I-forming] (393 aa).

It catalyses the reaction Produces alpha-D-fructofuranose beta-D-fructofuranose 1,2':2,1'-dianhydride (DFA I) by successively eliminating the diminishing (2-&gt;1)-beta-D-fructan (inulin) chain from the terminal D-fructosyl-D-fructosyl disaccharide.. This chain is Inulin fructotransferase [DFA-I-forming], found in Arthrobacter globiformis.